The chain runs to 470 residues: Cell division protein FtsA (470 aa).

The segment at 416-470 is disordered; that stretch reads NKKDTHENEVESTDEEIYQSEDNHQEHKQNHEHVQDKDKDKEESKFKKLMKSLFE. Residues 425–434 show a composition bias toward acidic residues; sequence VESTDEEIYQ. Basic and acidic residues predominate over residues 436 to 461; sequence EDNHQEHKQNHEHVQDKDKDKEESKF.

This sequence belongs to the FtsA/MreB family. Self-interacts. Interacts with FtsZ.

It localises to the cell membrane. Functionally, cell division protein that is involved in the assembly of the Z ring. May serve as a membrane anchor for the Z ring. This chain is Cell division protein FtsA, found in Staphylococcus aureus (strain MSSA476).